A 315-amino-acid polypeptide reads, in one-letter code: Outer membrane protease IcsP (315 aa).

Residues 1–20 form the signal peptide; that stretch reads MKLKFFVLALCVPAIFTTHA. Residues D103, D105, D230, and H232 contribute to the active site.

This sequence belongs to the peptidase A26 family.

The protein localises to the cell outer membrane. Protease responsible for the cleavage of IcsA between 'Arg-758' and 'Arg-759', removing the entire alpha domain from IscA localized on the bacterial surface. This proteolytic activity contributes to the maintenance of a tight polar cap of IcsA, which is important to Shigella actin-based motility. This is Outer membrane protease IcsP (icsP) from Shigella flexneri.